The sequence spans 335 residues: Cytoskeleton protein RodZ (335 aa).

The Cytoplasmic segment spans residues 1–111 (MNTEATHDQN…LGKRRKKRDG (111 aa)). In terms of domain architecture, HTH cro/C1-type spans 19–71 (LRNAREQLGLSQQAVAERLCLKVSTVRDIEEDKAPADLASTFLRGYIRSYARL). A DNA-binding region (H-T-H motif) is located at residues 30-49 (QQAVAERLCLKVSTVRDIEE). The helical; Signal-anchor for type II membrane protein transmembrane segment at 112–132 (WLMTFTWLVLFVVIGLSGAWW) threads the bilayer. Over 133–335 (WQDHKAQQEE…TLNAEQSPAQ (203 aa)) the chain is Periplasmic. Residues 148–164 (DQSSAELNNNQSQSVPL) show a composition bias toward polar residues. The interval 148-244 (DQSSAELNNN…PLPTDQAGVT (97 aa)) is disordered. 2 stretches are compositionally biased toward low complexity: residues 165 to 205 (DTST…DPQQ) and 217 to 239 (DTAA…LPTD).

Belongs to the RodZ family.

It is found in the cell inner membrane. Its function is as follows. Cytoskeletal protein that is involved in cell-shape control through regulation of the length of the long axis. The chain is Cytoskeleton protein RodZ from Escherichia coli O6:H1 (strain CFT073 / ATCC 700928 / UPEC).